We begin with the raw amino-acid sequence, 159 residues long: Cytochrome c-type biogenesis protein CcmE (159 aa).

At 1–8 (MNIRRKNR) the chain is on the cytoplasmic side. A helical; Signal-anchor for type II membrane protein membrane pass occupies residues 9–29 (LWIACAVLAGLALTITLVLYA). Over 30–159 (LRSNIDLFYT…PESVYKDKAS (130 aa)) the chain is Periplasmic. Heme-binding residues include histidine 130 and tyrosine 134. A disordered region spans residues 130-159 (HDENYTPPEVEKAMQENHRRPESVYKDKAS).

This sequence belongs to the CcmE/CycJ family.

The protein resides in the cell inner membrane. In terms of biological role, heme chaperone required for the biogenesis of c-type cytochromes. Transiently binds heme delivered by CcmC and transfers the heme to apo-cytochromes in a process facilitated by CcmF and CcmH. In Citrobacter koseri (strain ATCC BAA-895 / CDC 4225-83 / SGSC4696), this protein is Cytochrome c-type biogenesis protein CcmE.